Reading from the N-terminus, the 173-residue chain is Photosystem I assembly protein Ycf3 (173 aa).

TPR repeat units follow at residues 35–68 (AYVY…EENP), 72–105 (GETL…NPKQ), and 120–153 (GRTA…NPGG).

This sequence belongs to the Ycf3 family.

The protein resides in the cellular thylakoid membrane. In terms of biological role, essential for the assembly of the photosystem I (PSI) complex. May act as a chaperone-like factor to guide the assembly of the PSI subunits. This Synechococcus sp. (strain WH7803) protein is Photosystem I assembly protein Ycf3.